A 264-amino-acid chain; its full sequence is Cytosolic Fe-S cluster assembly factor Nubp2 homolog (264 aa).

Residue 14 to 21 (GKGGVGKS) coordinates ATP. Residues Cys188 and Cys191 each contribute to the [4Fe-4S] cluster site.

It belongs to the Mrp/NBP35 ATP-binding proteins family. NUBP2/CFD1 subfamily. In terms of assembly, heterotetramer of 2 Nubp1 and 2 Nubp2 chains. [4Fe-4S] cluster is required as a cofactor.

The protein localises to the cytoplasm. Its function is as follows. Component of the cytosolic iron-sulfur (Fe/S) protein assembly (CIA) machinery. Required for maturation of extramitochondrial Fe-S proteins. The Nubp1-Nubp2 heterotetramer forms a Fe-S scaffold complex, mediating the de novo assembly of an Fe-S cluster and its transfer to target apoproteins. This is Cytosolic Fe-S cluster assembly factor Nubp2 homolog from Drosophila grimshawi (Hawaiian fruit fly).